Here is a 678-residue protein sequence, read N- to C-terminus: Photosystem I P700 chlorophyll a apoprotein A1 (678 aa).

Transmembrane regions (helical) follow at residues 75–98 (VFAA…FHGA), 152–175 (LKVI…FHMH), 192–216 (STHH…HISL), 266–284 (SAMH…SVLG), 302–325 (WHLV…QMSN), 341–367 (VSLF…IGLV), 384–406 (IILG…LYVH), and 458–476 (FMVT…LILV). 2 residues coordinate [4Fe-4S] cluster: Cys-500 and Cys-509. 2 helical membrane passes run 516–537 (HVFL…HFFW) and 591–613 (LAAY…MFLF). Position 602 (His-602) interacts with chlorophyll a'. 2 residues coordinate chlorophyll a: Met-610 and Tyr-618. Trp-619 serves as a coordination point for phylloquinone. The helical transmembrane segment at 651-671 (AVGFTHYLLGGIGSTWSFFLA) threads the bilayer.

The protein belongs to the PsaA/PsaB family. In terms of assembly, the PsaA/B heterodimer binds the P700 chlorophyll special pair and subsequent electron acceptors. PSI consists of a core antenna complex that captures photons, and an electron transfer chain that converts photonic excitation into a charge separation. The eukaryotic PSI reaction center is composed of at least 11 subunits. P700 is a chlorophyll a/chlorophyll a' dimer, A0 is one or more chlorophyll a, A1 is one or both phylloquinones and FX is a shared 4Fe-4S iron-sulfur center. is required as a cofactor.

The protein resides in the plastid. The protein localises to the chloroplast thylakoid membrane. It catalyses the reaction reduced [plastocyanin] + hnu + oxidized [2Fe-2S]-[ferredoxin] = oxidized [plastocyanin] + reduced [2Fe-2S]-[ferredoxin]. Functionally, psaA and PsaB bind P700, the primary electron donor of photosystem I (PSI), as well as the electron acceptors A0, A1 and FX. PSI is a plastocyanin/cytochrome c6-ferredoxin oxidoreductase, converting photonic excitation into a charge separation, which transfers an electron from the donor P700 chlorophyll pair to the spectroscopically characterized acceptors A0, A1, FX, FA and FB in turn. Oxidized P700 is reduced on the lumenal side of the thylakoid membrane by plastocyanin or cytochrome c6. In Amphidinium carterae (Dinoflagellate), this protein is Photosystem I P700 chlorophyll a apoprotein A1.